Reading from the N-terminus, the 743-residue chain is Inhibitor of nuclear factor kappa-B kinase subunit alpha (743 aa).

One can recognise a Protein kinase domain in the interval 15–300 (WDMKDRLGTG…MDCGRPQCFV (286 aa)). Residues 21–29 (LGTGGFGNV) and Lys-44 each bind ATP. Asp-144 (proton acceptor) is an active-site residue. The leucine-zipper stretch occupies residues 453-474 (LLRFNTNLTKMKNTMVSASQQL). The NEMO-binding stretch occupies residues 736–741 (LDFSWL).

The protein belongs to the protein kinase superfamily. Ser/Thr protein kinase family. I-kappa-B kinase subfamily.

It is found in the cytoplasm. The protein localises to the nucleus. It catalyses the reaction L-seryl-[I-kappa-B protein] + ATP = O-phospho-L-seryl-[I-kappa-B protein] + ADP + H(+). With respect to regulation, activated when phosphorylated and inactivated when dephosphorylated. Phosphorylates inhibitors of NF-kappa-B thus leading to the dissociation of the inhibitor/NF-kappa-B complex and ultimately the degradation of the inhibitor. Phosphorylates 'Ser-10' of histone H3 at NF-kappa-B-regulated promoters during inflammatory responses triggered by cytokines. In Xenopus tropicalis (Western clawed frog), this protein is Inhibitor of nuclear factor kappa-B kinase subunit alpha (chuk).